The primary structure comprises 335 residues: Mevalonate kinase (335 aa).

ATP is bound at residue 111–121 (PVGAGLGSSAA). D162 (proton acceptor) is an active-site residue.

Belongs to the GHMP kinase family. Mevalonate kinase subfamily. In terms of assembly, homodimer. Requires Mg(2+) as cofactor.

Its subcellular location is the cytoplasm. The catalysed reaction is (R)-mevalonate + ATP = (R)-5-phosphomevalonate + ADP + H(+). Its pathway is isoprenoid biosynthesis; isopentenyl diphosphate biosynthesis via mevalonate pathway; isopentenyl diphosphate from (R)-mevalonate: step 1/3. Functionally, catalyzes the phosphorylation of (R)-mevalonate (MVA) to (R)-mevalonate 5-phosphate (MVAP). Functions in the mevalonate (MVA) pathway leading to isopentenyl diphosphate (IPP), a key precursor for the biosynthesis of isoprenoid compounds such as archaeal membrane lipids. The protein is Mevalonate kinase of Pyrococcus abyssi (strain GE5 / Orsay).